Consider the following 497-residue polypeptide: MFIRRLHTSSRRLTCGEALRACQQTGARSANGQLMLSQHVQEFDPEMYDILTKERSRQKRSITLIPSENFTSVAVMNLLGSEMQNKYSEGYPGQRYYGGNQYIDMAESLCQKRALELYGLDPAKWGVNVQSLSGAPANLYAYSAIMEVGDRMMGLDLPHGGHLSHGYQLQNGNKISYISKYFQTMAYRVDPATGLVDYDTLSETSKLFRPKVIVAGTSAYARVLDYKRFREIADACGAYLLSDMAHVSGLVAAGVHPSPFEYSDIVTTTTHKSLRGPRGAMIFYRKGIRKVTKKGTEIMYDLDKRINFSVFPAHQGGPHNHTISALAVALKQAATPEFKNYQTAVVENAKVFGEELSKRGFSLVSGGTDTHLLLIDLSPMGIDGSRLETILERLNIAANKNTIPGDKSALYPSGLRVGTPAMTTRGFGPAEFGRVAAYINEAVKLAIGLKSQEPVDAKDAKTRLAHFKSFCAESEQVTKLANEVADWVAQYPVPGEL.

Residues 1-27 constitute a mitochondrion transit peptide; that stretch reads MFIRRLHTSSRRLTCGEALRACQQTGA. Lysine 272 is modified (N6-(pyridoxal phosphate)lysine).

The protein belongs to the SHMT family. In terms of assembly, homotetramer. It depends on pyridoxal 5'-phosphate as a cofactor.

It localises to the mitochondrion. It catalyses the reaction (6R)-5,10-methylene-5,6,7,8-tetrahydrofolate + glycine + H2O = (6S)-5,6,7,8-tetrahydrofolate + L-serine. The protein operates within one-carbon metabolism; tetrahydrofolate interconversion. Its function is as follows. Interconversion of serine and glycine. This is Serine hydroxymethyltransferase, mitochondrial (SHM1) from Eremothecium gossypii (strain ATCC 10895 / CBS 109.51 / FGSC 9923 / NRRL Y-1056) (Yeast).